Consider the following 449-residue polypeptide: MYIKAIMNRHRLLSAATDECNKKLGQACSSSLSPVHNFLNVQPEHRKTPFIRSQSPDSPGQLWPKNSSQSTFSRSSTFCTNLYLSSSSTSETQKHLGNSLPFLPDPSSYTHSASGVESARSPSIFTEDLGNQCDGGNSGSLLKDFLNLSGDACSDGDFHDFGCSNDSYCLSDQMELQFLSDELELAITDRAETPRLDEIYETPLASNPVTRLSPSQSCVPGAMSVDVVSSHPSPGSAANQKSRMRWTPELHESFVKAVIKLEGPEKATPKAVKKLMNVEGLTIYHVKSHLQKYRLAKYMPEKKEEKRTDNSEEKKLALSKSEADEKKKGAIQLTEALRMQMEVQKQLHEQLEVQRVLQLRIEEHAKYLEKMLEEQRKTGRWISSSSQTVLSPSDDSIPDSQNMSKTKASSPQPPLPAENKASETEDDKCESPQKRRRLENIAESEDPKR.

The disordered stretch occupies residues 49-72 (PFIRSQSPDSPGQLWPKNSSQSTF). One can recognise an HTH myb-type domain in the interval 238–298 (ANQKSRMRWT…HLQKYRLAKY (61 aa)). Positions 269-294 (PKAVKKLMNVEGLTIYHVKSHLQKYR) form a DNA-binding region, H-T-H motif. The segment at 301–327 (EKKEEKRTDNSEEKKLALSKSEADEKK) is disordered. Residues 334–354 (TEALRMQMEVQKQLHEQLEVQ) form a coiled coil region. The short motif at 347 to 352 (LHEQLE) is the LHEQLE element. The tract at residues 376 to 449 (RKTGRWISSS…NIAESEDPKR (74 aa)) is disordered. Residues 381–410 (WISSSSQTVLSPSDDSIPDSQNMSKTKASS) are compositionally biased toward polar residues.

The protein belongs to the MYB-CC family.

It is found in the nucleus. The sequence is that of Myb family transcription factor PHL6 from Arabidopsis thaliana (Mouse-ear cress).